The sequence spans 246 residues: MSSPIVLIFGAGANIGYNVAKEFVASGYKAVLTSRKAPTEPDASFSYVQGDLSDPKSVTDTFSQVRKQFGEPSVVVYNGNSKWHSNKEIAAAVSFTAKEDPFVVDLPTFEKDLNINTTSTFVAIKEALASFAALPETASRTFIYTGNAMNFLPFGGAMTLGAGKSASAHMIAAAAAAYAPKGYKFYYPDERQPDGRLGGRGISGEAHAKIYKKLSEDKTQGPWLQTFVKGTGYVSFPADTDVSVAH.

4 residues coordinate NADP(+): Ile-15, Ser-34, Lys-125, and Lys-164. The active-site Lowers pKa of active site Tyr is the Lys-164.

It belongs to the short-chain dehydrogenases/reductases (SDR) family.

Its pathway is secondary metabolite biosynthesis. In terms of biological role, short chain dehydrogenase/reductase; part of the gene cluster that mediates the biosynthesis of the dimeric xanthones cryptosporioptides. The pathway begins with the synthesis of atrochrysone thioester by the polyketide synthase dmx-nrPKS. The atrochrysone carboxyl ACP thioesterase dmxR1 then breaks the thioester bond and releases the atrochrysone carboxylic acid from dmx-nrPKS. Atrochrysone carboxylic acid is decarboxylated by the decarboxylase dmxR15, and oxidized by the anthrone oxygenase dmxR16 to yield emodin. Emodin is then reduced to emodin hydroquinone by the oxidoreductase dmxR7. A-ring reduction by the short chain dehydrogenase dmxR18, dehydration by the scytalone dehydratase-like protein dmxR17 and probable spontaneous re-oxidation, results in overall deoxygenation to chrysophanol. Baeyer-Villiger oxidation by the Baeyer-Villiger monooxygenase (BVMO) dmxR6 then yields monodictylactone in equilibrium with monodictyphenone. In the case of the cryptosporioptides biosynthesis, monodictylactone is reduced at C-12 to an alcohol (by the short chain dehydrogenases dmxR12 or dmxR8) and hydroxylated at C-5 by dmxR9, yielding the electron-rich aromatic which could eliminate H(2)O to form the ortho-quinonemethide, followed by tautomerisation to paraquinone and complete the formal reduction to produce the 10-methylgroup. Conjugate addition of C-4a-OH to the resulting paraquinone by the monooxygenase dmxR10 then gives cyclohexadienone, which is then reduced at C-5 by the short chain dehydrogenase dmxR3 to give the dihydroxanthone. The 6,7-epoxide in the cryptosporioptides could be introduced by the cytochrome P450 monooxygenase dmxL3. The highly reducing PKS dmxL2 manufactures butyrate, which is further carboxylated by dmxL1 to form ethylmalonate. It is not yet clear whether the carboxylation occurs while the butyrate is attached to the ACP of dmxL2, but this unusual fungal metabolite could then be esterified to O-5 by the O-acetyltransferase dmxR13. Finally, dimerization performed by dmxR5 gives the observed dimers cryptosporioptides A, B and C as the final products of the pathway. In Cryptosporiopsis sp. (strain 8999), this protein is Short chain dehydrogenase/reductase dmxR12.